Reading from the N-terminus, the 195-residue chain is Sec-independent protein translocase protein TatB (195 aa).

A helical membrane pass occupies residues 1–21 (MFDIGFSELVLIFIVGLVVLG). The disordered stretch occupies residues 166 to 195 (DESQFAAYYPPDDDLASPTPSQPQDKQNVS). Over residues 183–195 (PTPSQPQDKQNVS) the composition is skewed to polar residues.

The protein belongs to the TatB family. In terms of assembly, the Tat system comprises two distinct complexes: a TatABC complex, containing multiple copies of TatA, TatB and TatC subunits, and a separate TatA complex, containing only TatA subunits. Substrates initially bind to the TatABC complex, which probably triggers association of the separate TatA complex to form the active translocon.

The protein resides in the cell inner membrane. Part of the twin-arginine translocation (Tat) system that transports large folded proteins containing a characteristic twin-arginine motif in their signal peptide across membranes. Together with TatC, TatB is part of a receptor directly interacting with Tat signal peptides. TatB may form an oligomeric binding site that transiently accommodates folded Tat precursor proteins before their translocation. This Actinobacillus pleuropneumoniae serotype 5b (strain L20) protein is Sec-independent protein translocase protein TatB.